A 365-amino-acid chain; its full sequence is tRNA(Met) cytidine acetate ligase (365 aa).

Residues 7 to 20 (IAEFNPFHNGHKYL), G96, N152, and R175 contribute to the ATP site.

This sequence belongs to the TmcAL family.

The protein localises to the cytoplasm. The catalysed reaction is cytidine(34) in elongator tRNA(Met) + acetate + ATP = N(4)-acetylcytidine(34) in elongator tRNA(Met) + AMP + diphosphate. Catalyzes the formation of N(4)-acetylcytidine (ac(4)C) at the wobble position of elongator tRNA(Met), using acetate and ATP as substrates. First activates an acetate ion to form acetyladenylate (Ac-AMP) and then transfers the acetyl group to tRNA to form ac(4)C34. This Streptococcus pneumoniae (strain ATCC 700669 / Spain 23F-1) protein is tRNA(Met) cytidine acetate ligase.